Here is a 298-residue protein sequence, read N- to C-terminus: MARSPQGLLMLLLLHYLIVALDYHKANGFSASKDHRQEVTVIEFQEAILACKTPKKTTSSRLEWKKVGQGVSLVYYQQALQGDFKDRAEMIDFNIRIKNVTRSDAGEYRCEVSAPTEQGQNLQEDKVMLEVLVAPAVPACEVPTSVMTGSVVELRCQDKEGNPAPEYIWFKDGTSLLGNPKGGTHNNSSYTMNTKSGILQFNMISKMDSGEYYCEARNSVGHRRCPGKRMQVDVLNISGIIATVVVVAFVISVCGLGTCYAQRKGYFSKETSFQKGSPASKVTTMSENDFKHTKSFII.

Positions 1-28 (MARSPQGLLMLLLLHYLIVALDYHKANG) are cleaved as a signal peptide. Over 29–236 (FSASKDHRQE…GKRMQVDVLN (208 aa)) the chain is Extracellular. Residues 32–128 (SKDHRQEVTV…GQNLQEDKVM (97 aa)) enclose the Ig-like V-type domain. Disulfide bonds link cysteine 51-cysteine 110 and cysteine 156-cysteine 214. Asparagine 99 is a glycosylation site (N-linked (GlcNAc...) asparagine). The Ig-like C2-type domain maps to 135–238 (PAVPACEVPT…RMQVDVLNIS (104 aa)). The helical transmembrane segment at 237–257 (ISGIIATVVVVAFVISVCGLG) threads the bilayer. The Cytoplasmic segment spans residues 258–298 (TCYAQRKGYFSKETSFQKGSPASKVTTMSENDFKHTKSFII).

It belongs to the immunoglobulin superfamily. In terms of processing, the expression in Sertoli cells is regulated by TGFB3 through ubiquitin-mediated proteasomal degradation. As to expression, expressed by bone marrow stromal cells (at protein level). Expressed in skin (at protein level). Expressed in testis by Sertoli cells (at protein level). Expressed by dorsal root ganglion and spinal cord neurons.

Its subcellular location is the cell membrane. The protein localises to the cell junction. It is found in the tight junction. Junctional adhesion protein that mediates heterotypic cell-cell interactions with its cognate receptor JAM3 to regulate different cellular processes. Plays a role in homing and mobilization of hematopoietic stem and progenitor cells within the bone marrow. At the surface of bone marrow stromal cells, it contributes to the retention of the hematopoietic stem and progenitor cells expressing JAM3. Plays a central role in leukocytes extravasation by facilitating not only transmigration but also tethering and rolling of leukocytes along the endothelium. Tethering and rolling of leukocytes are dependent on the binding by JAM2 of the integrin alpha-4/beta-1. Plays a role in spermatogenesis where JAM2 and JAM3, which are respectively expressed by Sertoli and germ cells, mediate an interaction between both cell types and play an essential role in the anchorage of germ cells onto Sertoli cells and the assembly of cell polarity complexes during spermatid differentiation. Also functions as an inhibitory somatodendritic cue that prevents the myelination of non-axonal parts of neurons. During myogenesis, it is involved in myocyte fusion. May also play a role in angiogenesis. This is Junctional adhesion molecule B from Mus musculus (Mouse).